Consider the following 555-residue polypeptide: DNA-directed primase/polymerase protein (555 aa).

Positions 1–22 (MKRKWEATLKQIEERASHYERK) form a coiled coil. Substrate is bound by residues Arg-76, 114–116 (DLE), and 165–169 (KFSRH). 2 residues coordinate Mn(2+): Asp-114 and Glu-116. The interval 210–230 (ETTGHEFTHFSETPSEQGTCF) is disordered. Polar residues predominate over residues 219–230 (FSETPSEQGTCF). Ser-255 is modified (phosphoserine). Substrate contacts are provided by residues 288 to 291 (RNFR) and Lys-297. Cys-418, His-425, Cys-445, and Cys-450 together coordinate Zn(2+). The short motif at 418 to 451 (CENIGRAHRSNNIMILVDLKNEVWYQKCHDPVCK) is the Zinc knuckle motif element. Residues 480 to 503 (TDTTADTETKSPHGPSSSVLSKGA) are disordered. The interval 480 to 555 (TDTTADTETK…DELLIEVLQE (76 aa)) is interaction with RPA1. 2 consecutive short sequence motifs (RPA1-binding motif) follow at residues 509–523 (WDNG…EATE) and 543–551 (EIPDELLIE).

It belongs to the eukaryotic-type primase small subunit family. Interacts with RPA1; leading to recruitment to chromatin and stimulate DNA primase activity. Interacts with SSBP1. Interacts with POLDIP2; leading to enhance DNA polymerase activity. Mn(2+) serves as cofactor.

The protein localises to the nucleus. The protein resides in the mitochondrion matrix. It is found in the chromosome. The catalysed reaction is ssDNA + n NTP = ssDNA/pppN(pN)n-1 hybrid + (n-1) diphosphate.. It catalyses the reaction DNA(n) + a 2'-deoxyribonucleoside 5'-triphosphate = DNA(n+1) + diphosphate. In terms of biological role, DNA primase and DNA polymerase required to tolerate replication-stalling lesions by bypassing them. Required to facilitate mitochondrial and nuclear replication fork progression by initiating de novo DNA synthesis using dNTPs and acting as an error-prone DNA polymerase able to bypass certain DNA lesions. Shows a high capacity to tolerate DNA damage lesions such as 8oxoG and abasic sites in DNA. Provides different translesion synthesis alternatives when DNA replication is stalled: able to synthesize DNA primers downstream of lesions, such as ultraviolet (UV) lesions, R-loops and G-quadruplexes, to allow DNA replication to continue. Can also realign primers ahead of 'unreadable lesions' such as abasic sites and 6-4 photoproduct (6-4 pyrimidine-pyrimidinone), thereby skipping the lesion. Repriming avoids fork degradation while leading to accumulation of internal ssDNA gaps behind the forks. Also able to incorporate nucleotides opposite DNA lesions such as 8oxoG, like a regular translesion synthesis DNA polymerase. Also required for reinitiating stalled forks after UV damage during nuclear DNA replication. Required for mitochondrial DNA (mtDNA) synthesis and replication, by reinitiating synthesis after UV damage or in the presence of chain-terminating nucleotides. Prevents APOBEC family-mediated DNA mutagenesis by repriming downstream of abasic site to prohibit error-prone translesion synthesis. Has non-overlapping function with POLH. In addition to its role in DNA damage response, also required to maintain efficient nuclear and mitochondrial DNA replication in unperturbed cells. The polypeptide is DNA-directed primase/polymerase protein (Bos taurus (Bovine)).